The sequence spans 697 residues: Elongation factor G (697 aa).

The 275-residue stretch at 8-282 (EDYRNIGIMA…AIVDYLPSPL (275 aa)) folds into the tr-type G domain. GTP contacts are provided by residues 17–24 (AHIDAGKT), 81–85 (DTPGH), and 135–138 (NKMD).

It belongs to the TRAFAC class translation factor GTPase superfamily. Classic translation factor GTPase family. EF-G/EF-2 subfamily.

Its subcellular location is the cytoplasm. In terms of biological role, catalyzes the GTP-dependent ribosomal translocation step during translation elongation. During this step, the ribosome changes from the pre-translocational (PRE) to the post-translocational (POST) state as the newly formed A-site-bound peptidyl-tRNA and P-site-bound deacylated tRNA move to the P and E sites, respectively. Catalyzes the coordinated movement of the two tRNA molecules, the mRNA and conformational changes in the ribosome. This chain is Elongation factor G, found in Metamycoplasma arthritidis (strain 158L3-1) (Mycoplasma arthritidis).